The sequence spans 715 residues: Scinderin (715 aa).

The actin-severing stretch occupies residues methionine 1–glutamate 363. Residues leucine 27–threonine 76 form a Gelsolin-like 1 repeat. At tyrosine 102 the chain carries Phosphotyrosine. A 1,2-diacyl-sn-glycero-3-phospho-(1D-myo-inositol-4,5-bisphosphate)-binding positions include lysine 112–alanine 119 and arginine 138–arginine 146. Gelsolin-like repeat units follow at residues valine 148–leucine 188, valine 265–lysine 307, valine 398–threonine 451, and threonine 523–lysine 564. Residues lysine 364–tryptophan 715 are ca(2+)-dependent actin binding. 3 residues coordinate Ca(2+): asparagine 538, aspartate 539, and glutamate 562. Tyrosine 599 bears the Phosphotyrosine mark. A Gelsolin-like 6 repeat occupies phenylalanine 626–lysine 668. Ca(2+) contacts are provided by aspartate 643, aspartate 644, and glutamate 666.

It belongs to the villin/gelsolin family. In terms of tissue distribution, expressed in megakaryocytes.

Its subcellular location is the cytoplasm. It localises to the cytoskeleton. It is found in the cell projection. The protein resides in the podosome. Functionally, ca(2+)-dependent actin filament-severing protein that has a regulatory function in exocytosis by affecting the organization of the microfilament network underneath the plasma membrane. Severing activity is inhibited by phosphatidylinositol 4,5-bis-phosphate (PIP2). In vitro, also has barbed end capping and nucleating activities in the presence of Ca(2+). Required for megakaryocyte differentiation, maturation, polyploidization and apoptosis with the release of platelet-like particles. Plays a role in osteoclastogenesis (OCG) and actin cytoskeletal organization in osteoclasts. Regulates chondrocyte proliferation and differentiation. Inhibits cell proliferation and tumorigenesis. Signaling is mediated by MAPK, p38 and JNK pathways. This Homo sapiens (Human) protein is Scinderin.